Consider the following 536-residue polypeptide: Signal peptide peptidase-like 5 (536 aa).

The first 29 residues, 1–29 (MSLPPFTCRLLAAAAALYLIGLLCVGADT), serve as a signal peptide directing secretion. The Lumenal segment spans residues 30–186 (KDVTAPKIPG…VELLLYAPKS (157 aa)). One can recognise a PA domain in the interval 94-170 (SNLTSKLSWS…TSSGDALKKS (77 aa)). N-linked (GlcNAc...) asparagine glycans are attached at residues N95 and N151. The chain crosses the membrane as a helical span at residues 187–207 (PIVDYAVVFLWLMSVGTVFVA). Over 208–243 (SVWSHVTSPKKNDEQYDELSPKKSSNVDATKGGAEE) the chain is Cytoplasmic. The interval 218–238 (KNDEQYDELSPKKSSNVDATK) is disordered. The helical transmembrane segment at 244 to 264 (ETLDISAMGAVIFVISASTFL) threads the bilayer. Over 265–273 (VLLFFFMSS) the chain is Lumenal. Residues 274-296 (WFILILTIFFVIGGMQGMHNINV) traverse the membrane as a helical segment. Topologically, residues 297 to 318 (TLITRRCSKCGQKNLKLPLLGN) are cytoplasmic. A helical membrane pass occupies residues 319-339 (TSILSLVVLLFCFVVAILWFM). At 340–344 (NRKTS) the chain is on the lumenal side. Residues 345–365 (HAWAGQDIFGICMMINVLQVA) traverse the membrane as a helical segment. The Cytoplasmic segment spans residues 366-374 (RLPNIRVAT). A helical membrane pass occupies residues 375 to 395 (ILLCCAFFYDIFWVFISPLIF). The active site involves D384. The Lumenal segment spans residues 396–428 (KQSVMIAVARGSKDTGESIPMLLRIPRLSDPWG). Residues 429–449 (GYNMIGFGDILFPGLLICFIF) traverse the membrane as a helical segment. D437 is a catalytic residue. Residues 450–463 (RFDKENNKGVSNGY) are Cytoplasmic-facing. Residues 464-484 (FPWLMFGYGLGLFLTYLGLYV) form a helical membrane-spanning segment. The Lumenal portion of the chain corresponds to 485 to 489 (MNGHG). Residues 490–510 (QPALLYLVPCTLGITVILGLV) form a helical membrane-spanning segment. Residues 491-493 (PAL) carry the PAL motif. Residues 511–536 (RKELRDLWNYGTQQPSAADVNPSPEA) lie on the Cytoplasmic side of the membrane.

This sequence belongs to the peptidase A22B family. Post-translationally, glycosylated.

It is found in the endosome membrane. In terms of biological role, intramembrane-cleaving aspartic protease (I-CLiP) that cleaves type II membrane signal peptides in the hydrophobic plane of the membrane. The sequence is that of Signal peptide peptidase-like 5 (SPPL5) from Arabidopsis thaliana (Mouse-ear cress).